An 83-amino-acid chain; its full sequence is Ardiscretin (83 aa).

Positions 1-20 are cleaved as a signal peptide; sequence MKGMIMLISCLMLIDVVVES. In terms of domain architecture, LCN-type CS-alpha/beta spans 21 to 82; the sequence is KNGYIIEPKG…IFDYYNNKCG (62 aa). 4 disulfide bridges follow: C31-C81, C35-C57, C43-C62, and C47-C64. C81 is subject to Cysteine amide.

In terms of tissue distribution, expressed by the venom gland.

The protein localises to the secreted. Inhibits the sodium (Nav) currents in an apparent irreversible manner. Produces small depolarization and induces repetitive firing in squid axons. Is specific for arthropods (crickets, triatomides, crabs and squids), but is non-toxic to mice. Shows antibacterial activity against both Gram-positive and Gram-negative bacteria. The polypeptide is Ardiscretin (Tityus discrepans (Venezuelan scorpion)).